The primary structure comprises 37 residues: Diptericin (37 aa).

A disordered region spans residues 1 to 37; it reads DLHIPPPDNKINWPQLSGGGGGSPKTGYDININAQQK.

This sequence belongs to the attacin/sarcotoxin-2 family. As to expression, synthesized by the fat body and secreted into the hemolymph.

The protein resides in the secreted. Functionally, acute phase protein with antibacterial activity against the Gram-negative bacteria E.coli (MIC=6.25 ug/ml) and S.sonnei (MIC=12.5 ug/ml). Lacks antibacterial activity against the Gram-negative bacteria P.vulgaris, P.rettgeri and P.aeruginosa, and against the Gram-positive bacteria B.subtilis, S.aureus, M.luteus, B.megaterium, C.bovis and E.cloacae. The polypeptide is Diptericin (Sarcophaga peregrina (Flesh fly)).